A 369-amino-acid chain; its full sequence is MHGESPIKRRESRKIWVGNVPVGGDAPIAVQSMTNTDTNDVAATVAQIQRLVDAGVDIVRVSVPDMDAAEAFGKIKQRVSVPLVADIHFDYKIALRVAELGVDCLRINPGNIGREDRVRAVVDAARDRGIPIRIGVNAGSLEKDLQKKYGEPTPAALVESALRHVEHLDRLDFQDFKVSVKASDVFMAVEAYRLLAKQIVQPLHLGITEAGGLRSGTVKSAVGLGMLLAEGIGDTIRISLAADPVEEVKVGYDILKSLHLRSRGINFIACPSCSRQNFDVVKTMNELEGRLEDLLVPLDVAVIGCVVNGPGEAKEAHVGLTGGTPNLIYIDGKPAQKLTNDNLVDELEKLIRQKAAEKAEADAALIVRG.

Positions 270, 273, 305, and 312 each coordinate [4Fe-4S] cluster.

The protein belongs to the IspG family. [4Fe-4S] cluster serves as cofactor.

The catalysed reaction is (2E)-4-hydroxy-3-methylbut-2-enyl diphosphate + oxidized [flavodoxin] + H2O + 2 H(+) = 2-C-methyl-D-erythritol 2,4-cyclic diphosphate + reduced [flavodoxin]. It functions in the pathway isoprenoid biosynthesis; isopentenyl diphosphate biosynthesis via DXP pathway; isopentenyl diphosphate from 1-deoxy-D-xylulose 5-phosphate: step 5/6. Converts 2C-methyl-D-erythritol 2,4-cyclodiphosphate (ME-2,4cPP) into 1-hydroxy-2-methyl-2-(E)-butenyl 4-diphosphate. This Pseudomonas putida (strain ATCC 700007 / DSM 6899 / JCM 31910 / BCRC 17059 / LMG 24140 / F1) protein is 4-hydroxy-3-methylbut-2-en-1-yl diphosphate synthase (flavodoxin).